Consider the following 694-residue polypeptide: Elongation factor G (694 aa).

The region spanning 6–288 (KLYRNIGIAA…GVIEYLPSPT (283 aa)) is the tr-type G domain. Residues 15 to 22 (AHVDAGKT), 86 to 90 (DTPGH), and 140 to 143 (NKMD) contribute to the GTP site.

Belongs to the TRAFAC class translation factor GTPase superfamily. Classic translation factor GTPase family. EF-G/EF-2 subfamily.

It is found in the cytoplasm. Functionally, catalyzes the GTP-dependent ribosomal translocation step during translation elongation. During this step, the ribosome changes from the pre-translocational (PRE) to the post-translocational (POST) state as the newly formed A-site-bound peptidyl-tRNA and P-site-bound deacylated tRNA move to the P and E sites, respectively. Catalyzes the coordinated movement of the two tRNA molecules, the mRNA and conformational changes in the ribosome. The sequence is that of Elongation factor G from Legionella pneumophila subsp. pneumophila (strain Philadelphia 1 / ATCC 33152 / DSM 7513).